The sequence spans 192 residues: Fe/S biogenesis protein NfuA (192 aa).

2 residues coordinate [4Fe-4S] cluster: Cys149 and Cys152.

This sequence belongs to the NfuA family. Homodimer. The cofactor is [4Fe-4S] cluster.

Involved in iron-sulfur cluster biogenesis. Binds a 4Fe-4S cluster, can transfer this cluster to apoproteins, and thereby intervenes in the maturation of Fe/S proteins. Could also act as a scaffold/chaperone for damaged Fe/S proteins. This is Fe/S biogenesis protein NfuA from Shewanella loihica (strain ATCC BAA-1088 / PV-4).